A 464-amino-acid polypeptide reads, in one-letter code: MSQILKTSLLIVGGGPGGYVAAIRAGQLGIPTVLVEGAALGGTCLNVGCIPSKALIHAAEEYLKARHYASRSALGIQVQAPSIDIARTVEWKDAIVDRLTSGVAALLKKHGVDVVQGWARILDGKSVAVELAGGGSQRIECEHLLLAAGSQSVELPILPLGGKVISSTEALAPGSLPKRLVVVGGGYIGLELGTAYRKLGVEVAVVEAQPRILPGYDEELTKPVAQALRRLGVELYLGHSLLGPSENGVRVRDGAGEEREIAADQVLVAVGRKPRSEGWNLESLGLDMNGRAVKVDDQCRTSMRNVWAIGDLAGEPMLAHRAMAQGEMVAELIAGKRRQFAPVAIPAVCFTDPEVVVAGLSPEQAKDAGLDCLVASFPFAANGRAMTLEANEGFVRVVARRDNHLVVGWQAVGKAVSELSTAFAQSLEMGARLEDIAGTIHAHPTLGEAVQEAALRALGHALHI.

Residues 36–44 (EGAALGGTC), K53, and A119 each bind FAD. The cysteines at positions 44 and 49 are disulfide-linked. NAD(+) contacts are provided by residues 184–188 (GGGYI), E207, and 269–272 (AVGR). FAD-binding residues include D311 and A319. H443 acts as the Proton acceptor in catalysis.

Belongs to the class-I pyridine nucleotide-disulfide oxidoreductase family. Homodimer. Requires FAD as cofactor.

It is found in the cytoplasm. The enzyme catalyses N(6)-[(R)-dihydrolipoyl]-L-lysyl-[protein] + NAD(+) = N(6)-[(R)-lipoyl]-L-lysyl-[protein] + NADH + H(+). In terms of biological role, the branched-chain alpha-keto dehydrogenase complex catalyzes the overall conversion of alpha-keto acids to acyl-CoA and CO(2). It contains multiple copies of 3 enzymatic components: branched-chain alpha-keto acid decarboxylase (E1), lipoamide acyltransferase (E2) and lipoamide dehydrogenase (E3). The polypeptide is Dihydrolipoyl dehydrogenase (Pseudomonas aeruginosa (strain ATCC 15692 / DSM 22644 / CIP 104116 / JCM 14847 / LMG 12228 / 1C / PRS 101 / PAO1)).